The primary structure comprises 244 residues: MNIDLNADLGEGCASDSELLTLVSSANIACGFHAGDAQTMLTCVREALKNGVAIGAHPSFPDRDNFGRTAMVLPPETVYAQTLYQIGALGAIVQAQGGVMRHVKPHGMLYNQAAKDPHLAQAIAKAVHDYDPSLILVGLAGSELIRAGERHRLVTRQEVFADRGYQADGSLVPRMQPGALIHDEEQALAQTLDMVQAGRVKSVTGVWTTVTAQTVCIHGDGEYALAFARRLRAAFNARNIHVIA.

Belongs to the LamB/PxpA family. Forms a complex composed of PxpA, PxpB and PxpC.

It carries out the reaction 5-oxo-L-proline + ATP + 2 H2O = L-glutamate + ADP + phosphate + H(+). In terms of biological role, catalyzes the cleavage of 5-oxoproline to form L-glutamate coupled to the hydrolysis of ATP to ADP and inorganic phosphate. In Salmonella typhimurium (strain LT2 / SGSC1412 / ATCC 700720), this protein is 5-oxoprolinase subunit A.